We begin with the raw amino-acid sequence, 519 residues long: Transketolase, chloroplastic (519 aa).

Residue Asp-11 coordinates Mg(2+). Residues Gly-12 and Asn-41 each coordinate thiamine diphosphate. Mg(2+) contacts are provided by Asn-41 and Ile-43. His-118 is a binding site for thiamine diphosphate. Substrate contacts are provided by His-118, Arg-212, and Ser-239. The thiamine diphosphate site is built by Glu-266 and Phe-293. The Proton donor role is filled by Glu-266. 3 residues coordinate substrate: His-317, Asp-325, and Arg-376.

It belongs to the transketolase family. As to quaternary structure, homodimer. It depends on Mg(2+) as a cofactor. The cofactor is Ca(2+). Mn(2+) serves as cofactor. Requires Co(2+) as cofactor. Thiamine diphosphate is required as a cofactor. Constitutively expressed in leaves and roots.

The protein resides in the plastid. Its subcellular location is the chloroplast. It catalyses the reaction D-sedoheptulose 7-phosphate + D-glyceraldehyde 3-phosphate = aldehydo-D-ribose 5-phosphate + D-xylulose 5-phosphate. In terms of biological role, catalyzes the transfer of a two-carbon ketol group from a ketose donor to an aldose acceptor, via a covalent intermediate with the cofactor thiamine pyrophosphate. The sequence is that of Transketolase, chloroplastic (TKT3) from Craterostigma plantagineum (Blue gem).